The following is a 390-amino-acid chain: Formate-dependent phosphoribosylglycinamide formyltransferase (390 aa).

N(1)-(5-phospho-beta-D-ribosyl)glycinamide-binding positions include 18–19 and glutamate 78; that span reads EL. ATP contacts are provided by residues arginine 110, lysine 151, 156–161, 191–194, and glutamate 199; these read SSGKGQ and EEFL. The ATP-grasp domain occupies 115 to 305; the sequence is DLASKELNIK…EFELHLRAFL (191 aa). Positions 264 and 276 each coordinate Mg(2+). N(1)-(5-phospho-beta-D-ribosyl)glycinamide-binding positions include aspartate 283, lysine 353, and 360–361; that span reads RR.

Belongs to the PurK/PurT family. Homodimer.

It carries out the reaction N(1)-(5-phospho-beta-D-ribosyl)glycinamide + formate + ATP = N(2)-formyl-N(1)-(5-phospho-beta-D-ribosyl)glycinamide + ADP + phosphate + H(+). It participates in purine metabolism; IMP biosynthesis via de novo pathway; N(2)-formyl-N(1)-(5-phospho-D-ribosyl)glycinamide from N(1)-(5-phospho-D-ribosyl)glycinamide (formate route): step 1/1. Functionally, involved in the de novo purine biosynthesis. Catalyzes the transfer of formate to 5-phospho-ribosyl-glycinamide (GAR), producing 5-phospho-ribosyl-N-formylglycinamide (FGAR). Formate is provided by PurU via hydrolysis of 10-formyl-tetrahydrofolate. The chain is Formate-dependent phosphoribosylglycinamide formyltransferase from Prochlorococcus marinus (strain MIT 9515).